The chain runs to 332 residues: Anthranilate phosphoribosyltransferase (332 aa).

Residues Gly79, 82–83 (GD), Thr87, 89–92 (NIST), 107–115 (KHGNRSVSS), and Ser119 each bind 5-phospho-alpha-D-ribose 1-diphosphate. Gly79 serves as a coordination point for anthranilate. Position 91 (Ser91) interacts with Mg(2+). Asn110 lines the anthranilate pocket. Position 165 (Arg165) interacts with anthranilate. Mg(2+) is bound by residues Asp223 and Glu224.

It belongs to the anthranilate phosphoribosyltransferase family. As to quaternary structure, homodimer. The cofactor is Mg(2+).

The catalysed reaction is N-(5-phospho-beta-D-ribosyl)anthranilate + diphosphate = 5-phospho-alpha-D-ribose 1-diphosphate + anthranilate. The protein operates within amino-acid biosynthesis; L-tryptophan biosynthesis; L-tryptophan from chorismate: step 2/5. Catalyzes the transfer of the phosphoribosyl group of 5-phosphorylribose-1-pyrophosphate (PRPP) to anthranilate to yield N-(5'-phosphoribosyl)-anthranilate (PRA). The polypeptide is Anthranilate phosphoribosyltransferase (Vibrio vulnificus (strain YJ016)).